Consider the following 403-residue polypeptide: Exodeoxyribonuclease 7 large subunit (403 aa).

This sequence belongs to the XseA family. As to quaternary structure, heterooligomer composed of large and small subunits.

The protein localises to the cytoplasm. It carries out the reaction Exonucleolytic cleavage in either 5'- to 3'- or 3'- to 5'-direction to yield nucleoside 5'-phosphates.. Bidirectionally degrades single-stranded DNA into large acid-insoluble oligonucleotides, which are then degraded further into small acid-soluble oligonucleotides. The polypeptide is Exodeoxyribonuclease 7 large subunit (Clostridium botulinum (strain Okra / Type B1)).